Reading from the N-terminus, the 190-residue chain is Large ribosomal subunit protein bL25 (190 aa).

This sequence belongs to the bacterial ribosomal protein bL25 family. CTC subfamily. Part of the 50S ribosomal subunit; part of the 5S rRNA/L5/L18/L25 subcomplex. Contacts the 5S rRNA. Binds to the 5S rRNA independently of L5 and L18.

Its function is as follows. This is one of the proteins that binds to the 5S RNA in the ribosome where it forms part of the central protuberance. The chain is Large ribosomal subunit protein bL25 from Neisseria meningitidis serogroup A / serotype 4A (strain DSM 15465 / Z2491).